Consider the following 239-residue polypeptide: Putative 3-methyladenine DNA glycosylase (239 aa).

The protein belongs to the DNA glycosylase MPG family.

The sequence is that of Putative 3-methyladenine DNA glycosylase from Pseudomonas aeruginosa (strain LESB58).